Reading from the N-terminus, the 423-residue chain is Haloacid dehalogenase-like hydrolase domain-containing 5 (423 aa).

Residues 1–23 (MAAWGCVAALGAARGLCWRAARA) form the signal peptide.

Belongs to the HAD-like hydrolase superfamily. In terms of tissue distribution, widely expressed.

This Homo sapiens (Human) protein is Haloacid dehalogenase-like hydrolase domain-containing 5.